A 946-amino-acid chain; its full sequence is Rho GTPase-activating protein 4 (946 aa).

The region spanning 19-317 is the F-BAR domain; it reads TQVKEMRWQL…AVEALDPPGD (299 aa). Residues 128–195 are a coiled coil; sequence LAQRLSHIAE…REAERQEEKR (68 aa). A compositionally biased stretch (basic and acidic residues) spans 187–196; it reads EAERQEEKRA. Disordered stretches follow at residues 187–220 and 402–435; these read EAER…SLKK and LDSF…QQQE. Low complexity-rich tracts occupy residues 202–211 and 407–419; these read TTTAGATEAG and TSPS…STSS. One can recognise a Rho-GAP domain in the interval 507–695; sequence GDMEKFIQSS…TLIVQPDRVF (189 aa). Residues 746–805 enclose the SH3 domain; the sequence is EGVVEAVACFAYTGRTAQELSFRRGDVLRLHERASSDWWRGEHNGMRGLIPHKYITLPAG. Phosphoserine is present on residues serine 860, serine 901, and serine 906. The segment at 885-946 is disordered; sequence KTSVRQGLGP…QGLDTTPKPH (62 aa). Residues 901-910 are compositionally biased toward pro residues; sequence SPGPRSPKAP. Residues 924–934 show a composition bias toward low complexity; it reads GPGAPASPSAS.

As to quaternary structure, interacts with NCKAP1L. In terms of tissue distribution, predominantly in hematopoietic cells (spleen, thymus and leukocytes); low levels in placenta, lung and various fetal tissues.

It is found in the cytoplasm. Its function is as follows. Inhibitory effect on stress fiber organization. May down-regulate Rho-like GTPase in hematopoietic cells. The protein is Rho GTPase-activating protein 4 of Homo sapiens (Human).